Consider the following 512-residue polypeptide: Altronate oxidoreductase (512 aa).

26–37 (VLQFGEGNFLRG) serves as a coordination point for NAD(+).

It belongs to the mannitol dehydrogenase family. UxaB subfamily.

It catalyses the reaction D-altronate + NAD(+) = keto-D-tagaturonate + NADH + H(+). Its pathway is carbohydrate metabolism; pentose and glucuronate interconversion. The sequence is that of Altronate oxidoreductase from Halalkalibacterium halodurans (strain ATCC BAA-125 / DSM 18197 / FERM 7344 / JCM 9153 / C-125) (Bacillus halodurans).